Reading from the N-terminus, the 112-residue chain is Photosystem II reaction center Psb28 protein (112 aa).

Belongs to the Psb28 family. In terms of assembly, part of the photosystem II complex.

The protein resides in the cellular thylakoid membrane. This Synechocystis sp. (strain ATCC 27184 / PCC 6803 / Kazusa) protein is Photosystem II reaction center Psb28 protein.